Reading from the N-terminus, the 515-residue chain is Aldehyde dehydrogenase tropH (515 aa).

NAD(+) is bound at residue 238–243; it reads GSVATG. The active-site Proton acceptor is the Glu-260. Cys-295 (nucleophile) is an active-site residue.

It belongs to the aldehyde dehydrogenase family.

It catalyses the reaction an aldehyde + NAD(+) + H2O = a carboxylate + NADH + 2 H(+). It functions in the pathway secondary metabolite biosynthesis. Functionally, aldehyde dehydrogenase; part of the gene cluster that mediates the biosynthesis of the tropolone class of fungal maleic anhydrides. The pathway begins with the synthesis of 3-methylorcinaldehyde by the non-reducing polyketide synthase (PKS) tropA. 3-methylorcinaldehyde is the substrate for the FAD-dependent monooxygenase tropB to yield a dearomatized hydroxycyclohexadione. The 2-oxoglutarate-dependent dioxygenase tropC then performs the oxidative ring expansion to provide the first tropolone metabolite stipitaldehyde. Trop D converts stipitaldehyde into stipitacetal which is in turn converted to stipitalide by the short-chain dehydrogenase/reductase tropE. The next steps involve tropF, tropG, tropH, tropI and tropJ to form successive tropolone maleic anhydrides including stipitaldehydic, stipitatonic and stipitatic acids. In Talaromyces stipitatus (strain ATCC 10500 / CBS 375.48 / QM 6759 / NRRL 1006) (Penicillium stipitatum), this protein is Aldehyde dehydrogenase tropH.